We begin with the raw amino-acid sequence, 374 residues long: uncharacterized protein (374 aa).

Residues 39 to 66 adopt a coiled-coil conformation; that stretch reads RDVRKHLESRDAKQELIDSLEEAVRDSR.

This is an uncharacterized protein from Mycobacterium tuberculosis (strain CDC 1551 / Oshkosh).